A 91-amino-acid polypeptide reads, in one-letter code: Small ribosomal subunit protein bS18 (91 aa).

The disordered stretch occupies residues 1-21; sequence MSDERAPQRSTGPRKKRPFQR. Residues 12–21 show a composition bias toward basic residues; that stretch reads GPRKKRPFQR.

The protein belongs to the bacterial ribosomal protein bS18 family. As to quaternary structure, part of the 30S ribosomal subunit. Forms a tight heterodimer with protein bS6.

Functionally, binds as a heterodimer with protein bS6 to the central domain of the 16S rRNA, where it helps stabilize the platform of the 30S subunit. The protein is Small ribosomal subunit protein bS18 of Geotalea daltonii (strain DSM 22248 / JCM 15807 / FRC-32) (Geobacter daltonii).